A 551-amino-acid polypeptide reads, in one-letter code: Glucans biosynthesis protein D (551 aa).

Positions 1 to 32 (MDRRRFIKGSMAMAAVCGTSGIASLFSQAAFA) form a signal peptide, tat-type signal.

Belongs to the OpgD/OpgG family. Post-translationally, predicted to be exported by the Tat system. The position of the signal peptide cleavage has not been experimentally proven.

The protein localises to the periplasm. Its pathway is glycan metabolism; osmoregulated periplasmic glucan (OPG) biosynthesis. Its function is as follows. Probably involved in the control of the structural glucose backbone of osmoregulated periplasmic glucans (OPGs). In Shigella dysenteriae serotype 1 (strain Sd197), this protein is Glucans biosynthesis protein D.